Consider the following 436-residue polypeptide: MSHEAVWQHVLEHIRRSITEVEFHTWFERIRPLGIRDGVLELAVPTSFALDWIRRHYAGLIQEALGLLGAQAPRFELRVVPGVVVQEDIFQAAPAEAPRPKLNPKYTFENFVVGPNNSMAHAAAVAVAESPGRAYNPLFIYGGVGLGKTHLMHAVGHSVAKRFPHLKIEYVSTETFTNELINAIREDRMTEFRERYRSVDLLLVDDVQFIAGKERTQEEFFHTFNALYEAHKQIILSSDRPPKDILTLEARLRSRFEWGLITDIQPPDLETRIAILKMNAEQRGLRIPEDALEYIARQVTSNIRELEGALMRAIAFASLNGVELTRAVAAKALSDIFAPRELEADPLEIIRKVADHFGLKPEELTGSGRKKEVVLPRQLAMYLVRELTRASLPEIGQLFGGRDHTTVLYAIQKVQELAESDREVQGLLRTLREACT.

Positions 1 to 80 (MSHEAVWQHV…QAPRFELRVV (80 aa)) are domain I, interacts with DnaA modulators. The interval 80–100 (VPGVVVQEDIFQAAPAEAPRP) is domain II. The segment at 101-317 (KLNPKYTFEN…GALMRAIAFA (217 aa)) is domain III, AAA+ region. ATP is bound by residues Gly-145, Gly-147, Lys-148, and Thr-149. The tract at residues 318–436 (SLNGVELTRA…LLRTLREACT (119 aa)) is domain IV, binds dsDNA.

This sequence belongs to the DnaA family. As to quaternary structure, oligomerizes as a right-handed, spiral filament on DNA at oriC.

The protein resides in the cytoplasm. In terms of biological role, plays an essential role in the initiation and regulation of chromosomal replication. ATP-DnaA binds to the origin of replication (oriC) to initiate formation of the DNA replication initiation complex once per cell cycle. Binds the DnaA box (a 9 base pair repeat at the origin) and separates the double-stranded (ds)DNA. Forms a right-handed helical filament on oriC DNA; dsDNA binds to the exterior of the filament while single-stranded (ss)DNA is stabiized in the filament's interior. The ATP-DnaA-oriC complex binds and stabilizes one strand of the AT-rich DNA unwinding element (DUE), permitting loading of DNA polymerase. After initiation quickly degrades to an ADP-DnaA complex that is not apt for DNA replication. Binds acidic phospholipids. This Thermus thermophilus (strain ATCC BAA-163 / DSM 7039 / HB27) protein is Chromosomal replication initiator protein DnaA.